A 150-amino-acid chain; its full sequence is Large ribosomal subunit protein uL22c (150 aa).

The protein belongs to the universal ribosomal protein uL22 family. As to quaternary structure, part of the 50S ribosomal subunit.

It is found in the plastid. This protein binds specifically to 23S rRNA. Its function is as follows. The globular domain of the protein is located near the polypeptide exit tunnel on the outside of the subunit, while an extended beta-hairpin is found that lines the wall of the exit tunnel in the center of the 70S ribosome. The chain is Large ribosomal subunit protein uL22c (rpl22) from Orobanche minor (Small broomrape).